Consider the following 581-residue polypeptide: Pyridine nucleotide-disulfide oxidoreductase domain-containing protein 2 (581 aa).

Residue 38 to 71 (VVIGAGHNGLVVAAYLQRLGVNTAVFERRHVIGG) participates in FAD binding.

The protein belongs to the carotenoid/retinoid oxidoreductase family. As to quaternary structure, interacts with COX5B; this interaction may contribute to localize PYROXD2 to the inner face of the inner mitochondrial membrane.

It is found in the mitochondrion matrix. Probable oxidoreductase that may play a role as regulator of mitochondrial function. This Pongo abelii (Sumatran orangutan) protein is Pyridine nucleotide-disulfide oxidoreductase domain-containing protein 2.